The following is a 3508-amino-acid chain: WD repeat and FYVE domain-containing protein 3 (3508 aa).

Phosphoserine occurs at positions 1942 and 2277. 2 disordered regions span residues 2279 to 2303 (FGLS…SPSP) and 2441 to 2504 (SSEG…EKTD). The interval 2284–2963 (LTGSRRNRKE…PHPPKRVRSR (680 aa)) is sufficient for translocalization to p62 bodies/ALIS. Positions 2450-2459 (EPEHGEDTIA) are enriched in basic and acidic residues. Serine 2474 bears the Phosphoserine mark. In terms of domain architecture, BEACH-type PH spans 2513-2638 (EEGEKIQHMY…IRNKVYQRFL (126 aa)). The segment at 2568-3508 (MHEPIIPRGA…RGAEDGPRNC (941 aa)) is interaction with SQSTM1. A BEACH domain is found at 2665–2958 (GLLSTLVGEK…QLFKKPHPPK (294 aa)). Positions 2963–3508 (RLNGDNIGIS…RGAEDGPRNC (546 aa)) are interaction with ATG5. 4 WD repeats span residues 3059-3097 (SEWG…EKAK), 3107-3146 (GHTD…FLTQ), 3149-3188 (GHRA…VSVN), and 3192-3236 (GRSQ…VPET). The segment at 3254 to 3317 (AQIGQQAQDD…SGSDDSRRWS (64 aa)) is disordered. The span at 3261-3272 (QDDDSSDSETEE) shows a compositional bias: acidic residues. Residues serine 3317 and serine 3321 each carry the phosphoserine modification. The LIR motif lies at 3326 to 3331 (DGFIFV). The WD 5 repeat unit spans residues 3390-3429 (THPAEVTALGVSKDHSRILVGDSRGRVFSWSVSDQPGRSA). The segment at 3436-3496 (DEGGDSCSGC…VCQNCYYSLQ (61 aa)) adopts an FYVE-type zinc-finger fold. Cysteine 3442, cysteine 3445, cysteine 3458, cysteine 3461, cysteine 3466, cysteine 3469, cysteine 3488, and cysteine 3491 together coordinate Zn(2+).

Directly interacts with ATG5 and associates with the ATG12-ATG5-ATG16L complex. Interacts with p62/SQSTM1. Directly interacts with GABARAP, GABARAPL1 and GABARAPL2; the interaction with GABARAP is required for WDFY3 recruitment to MAP1LC3B-positive p62/SQSTM1 bodies. Weakly interacts with MAP1LC3C; this interaction is direct. Does not interact with MAP1LC3A, nor MAP1LC3B. Interacts with TRAF6. In terms of tissue distribution, widely expressed, with high levels in the brain (at protein level). In the brain, expressed by both neuronal and non-neuronal cells. Expressed in bones, in the periosteum, cartilage, growth plate, trabeculae of the primary spongiosa, and scattered hematopoietic cells within the medullary cavity. Tends to be expressed at lower levels in the hypertrophic zone compared to trabeculae. Expressed in osteoblasts, osteoclasts and bone-marrow derived macrophages.

It is found in the nucleus. The protein resides in the cytoplasm. It localises to the cytosol. The protein localises to the PML body. Its subcellular location is the membrane. It is found in the perikaryon. The protein resides in the cell projection. It localises to the axon. Required for selective macroautophagy (aggrephagy). Acts as an adapter protein by linking specific proteins destined for degradation to the core autophagic machinery members, such as the ATG5-ATG12-ATG16L E3-like ligase, SQSTM1 and LC3. Involved in the formation and autophagic degradation of cytoplasmic ubiquitin-containing inclusions (p62 bodies, ALIS/aggresome-like induced structures). Important for normal brain development. Essential for the formation of axonal tracts throughout the brain and spinal cord, including the formation of the major forebrain commissures. Involved in the ability of neural cells to respond to guidance cues. Required for cortical neurons to respond to the trophic effects of netrin-1/NTN1. Regulates Wnt signaling through the removal of DVL3 aggregates, likely in an autophagy-dependent manner. This process may be important for the determination of brain size during embryonic development. May regulate osteoclastogenesis by acting on the TNFSF11/RANKL - TRAF6 pathway. After cytokinetic abscission, involved in midbody remnant degradation. In vitro strongly binds to phosphatidylinositol 3-phosphate (PtdIns3P). The chain is WD repeat and FYVE domain-containing protein 3 (Wdfy3) from Mus musculus (Mouse).